Consider the following 306-residue polypeptide: MKSKSLVSIDQCSKEDILRILDNARKFEENPNRKLLEGKVAATLFFEPSTRTRLSFETAVNRLGGRVIGFSDASTTSSSKGETLKDTILMVSNYVDLIIMRHHLEGAARYASEVTDVPIINAGDGANQHPSQTMLDLYSIRKTQGKLDNLTITMVGDLKYGRTVHSLIVGMSHFHPTFHFVAPNELRMPDEQKNFCDKHGLKYEEHTDFTEDIINQTDILYMTRVQRERFTDLEEYERVKNVYILRNDMLRNSRENLRILHPLPRVNEIAYDVDDNPKAYYIQQARNGLFARQAIICEVLGISIDE.

The carbamoyl phosphate site is built by Arg-51 and Thr-52. Lys-80 contacts L-aspartate. 3 residues coordinate carbamoyl phosphate: Arg-101, His-129, and Gln-132. L-aspartate is bound by residues Arg-162 and Arg-224. Carbamoyl phosphate-binding residues include Leu-263 and Pro-264.

It belongs to the aspartate/ornithine carbamoyltransferase superfamily. ATCase family. Heterododecamer (2C3:3R2) of six catalytic PyrB chains organized as two trimers (C3), and six regulatory PyrI chains organized as three dimers (R2).

It carries out the reaction carbamoyl phosphate + L-aspartate = N-carbamoyl-L-aspartate + phosphate + H(+). The protein operates within pyrimidine metabolism; UMP biosynthesis via de novo pathway; (S)-dihydroorotate from bicarbonate: step 2/3. Functionally, catalyzes the condensation of carbamoyl phosphate and aspartate to form carbamoyl aspartate and inorganic phosphate, the committed step in the de novo pyrimidine nucleotide biosynthesis pathway. The chain is Aspartate carbamoyltransferase catalytic subunit from Parabacteroides distasonis (strain ATCC 8503 / DSM 20701 / CIP 104284 / JCM 5825 / NCTC 11152).